The primary structure comprises 272 residues: Tryptophan synthase alpha chain (272 aa).

Residues glutamate 49 and aspartate 60 each act as proton acceptor in the active site.

It belongs to the TrpA family. As to quaternary structure, tetramer of two alpha and two beta chains.

The catalysed reaction is (1S,2R)-1-C-(indol-3-yl)glycerol 3-phosphate + L-serine = D-glyceraldehyde 3-phosphate + L-tryptophan + H2O. It functions in the pathway amino-acid biosynthesis; L-tryptophan biosynthesis; L-tryptophan from chorismate: step 5/5. Its function is as follows. The alpha subunit is responsible for the aldol cleavage of indoleglycerol phosphate to indole and glyceraldehyde 3-phosphate. The polypeptide is Tryptophan synthase alpha chain (Polaromonas sp. (strain JS666 / ATCC BAA-500)).